An 87-amino-acid polypeptide reads, in one-letter code: uncharacterized protein (87 aa).

This is an uncharacterized protein from Escherichia coli (Bacteriophage T4).